The chain runs to 148 residues: MYVENSYLSKQLCFLFYVSSKEIIKKYTDYLKEYGLTYTGYIVLMAIEDDEKLNIKKLGERVFLDSGTLTPLLKKLEKKNYVIRTREEQDERNLQISLTERGKDIQNVLSDISQSVFNEFNITQEETQNLVEDLQNFVTKNFDKTVEK.

The 131-residue stretch at 9 to 139 folds into the HTH marR-type domain; sequence SKQLCFLFYV…LVEDLQNFVT (131 aa). The segment at residues 55–78 is a DNA-binding region (H-T-H motif); sequence IKKLGERVFLDSGTLTPLLKKLEK.

It belongs to the SarZ family.

It localises to the cytoplasm. This Staphylococcus epidermidis (strain ATCC 35984 / DSM 28319 / BCRC 17069 / CCUG 31568 / BM 3577 / RP62A) protein is HTH-type transcriptional regulator SarZ (sarZ).